Reading from the N-terminus, the 186-residue chain is MTEEKSTNKKNSLFEWVKAIIIAVVLALLIRAFLFEPYLVEGTSMDPTLHDGERLFVYKTVRYVGEFKRGDIVIIDGDEKNVHYVKRLIGLPGDTVQMKDDTLYINGKKVSEPYLSENRKEAEAVGVKLTGDFGPVKVPEGKYFVMGDNRQRSMDSRNGLGLIDKKRVAGTSQFVFFPFNEIRKTD.

At 1–19 (MTEEKSTNKKNSLFEWVKA) the chain is on the cytoplasmic side. Residues 20–40 (IIIAVVLALLIRAFLFEPYLV) form a helical membrane-spanning segment. The Extracellular portion of the chain corresponds to 41 to 186 (EGTSMDPTLH…FPFNEIRKTD (146 aa)). Residues Ser-44 and Lys-86 contribute to the active site.

This sequence belongs to the peptidase S26 family.

It is found in the cell membrane. It carries out the reaction Cleavage of hydrophobic, N-terminal signal or leader sequences from secreted and periplasmic proteins.. The sequence is that of Signal peptidase I (lepB) from Bacillus licheniformis.